Consider the following 652-residue polypeptide: Threonine--tRNA ligase (652 aa).

The TGS domain occupies 1–64 (MPDVIRITFP…HEDGELVIIT (64 aa)). Residues 245 to 542 (DHRKLGKELE…LIEEYKGAFP (298 aa)) are catalytic. Zn(2+) is bound by residues C338, H389, and H519.

Belongs to the class-II aminoacyl-tRNA synthetase family. As to quaternary structure, homodimer. It depends on Zn(2+) as a cofactor.

Its subcellular location is the cytoplasm. The catalysed reaction is tRNA(Thr) + L-threonine + ATP = L-threonyl-tRNA(Thr) + AMP + diphosphate + H(+). Catalyzes the attachment of threonine to tRNA(Thr) in a two-step reaction: L-threonine is first activated by ATP to form Thr-AMP and then transferred to the acceptor end of tRNA(Thr). Also edits incorrectly charged L-seryl-tRNA(Thr). The sequence is that of Threonine--tRNA ligase from Geobacillus kaustophilus (strain HTA426).